The chain runs to 394 residues: Putative serine protease HhoA (394 aa).

An N-terminal signal peptide occupies residues 1 to 24 (MKYPTWLRRIGGYLLAFAVGTAFG). One can recognise a PDZ domain in the interval 293–377 (MMNITVDQAQ…ALKLDLLRGD (85 aa)).

Belongs to the peptidase S1C family.

The protein resides in the periplasm. Functionally, a putative protease, its function overlaps that of the related putative proteases HhoB and HtrA. This chain is Putative serine protease HhoA (hhoA), found in Synechocystis sp. (strain ATCC 27184 / PCC 6803 / Kazusa).